An 82-amino-acid chain; its full sequence is Cytochrome b559 subunit alpha (82 aa).

The chain crosses the membrane as a helical span at residues 22–36 (IIHAVALPAIFVAGF). Residue histidine 24 participates in heme binding.

The protein belongs to the PsbE/PsbF family. Heterodimer of an alpha subunit and a beta subunit. PSII is composed of 1 copy each of membrane proteins PsbA, PsbB, PsbC, PsbD, PsbE, PsbF, PsbH, PsbI, PsbJ, PsbK, PsbL, PsbM, PsbT, PsbX, PsbY, Psb30/Ycf12, peripheral proteins PsbO, CyanoQ (PsbQ), PsbU, PsbV and a large number of cofactors. It forms dimeric complexes. It depends on heme b as a cofactor.

The protein localises to the cellular thylakoid membrane. Functionally, this b-type cytochrome is tightly associated with the reaction center of photosystem II (PSII). PSII is a light-driven water:plastoquinone oxidoreductase that uses light energy to abstract electrons from H(2)O, generating O(2) and a proton gradient subsequently used for ATP formation. It consists of a core antenna complex that captures photons, and an electron transfer chain that converts photonic excitation into a charge separation. This Prochlorococcus marinus (strain NATL1A) protein is Cytochrome b559 subunit alpha.